The primary structure comprises 328 residues: 2-hydroxyisoflavanone dehydratase (328 aa).

The Involved in the stabilization of the negatively charged intermediate by the formation of the oxyanion hole signature appears at 85–87 (HGG). Catalysis depends on residues threonine 173, aspartate 272, and histidine 304.

The protein belongs to the 'GDXG' lipolytic enzyme family.

It catalyses the reaction (2R,3S)-2,4',7-trihydroxyisoflavanone = daidzein + H2O + H(+). The enzyme catalyses 2-hydroxy-2,3-dihydrogenistein = genistein + H2O + H(+). It carries out the reaction a carboxylic ester + H2O = an alcohol + a carboxylate + H(+). Its pathway is secondary metabolite biosynthesis; flavonoid biosynthesis. Dehydratase that mediates the biosynthesis of isoflavonoids. Can better use 2,7-dihydroxy-4'-methoxyisoflavanone as substrate. Has also a slight carboxylesterase activity toward p-nitrophenyl butyrate. The sequence is that of 2-hydroxyisoflavanone dehydratase (HIDM) from Glycyrrhiza echinata (Licorice).